Here is a 583-residue protein sequence, read N- to C-terminus: Alpha-1,3-arabinosyltransferase XAT2 (583 aa).

At 1–21 (MKPVERAKLVRSLRQESRRLR) the chain is on the cytoplasmic side. A helical; Signal-anchor for type II membrane protein membrane pass occupies residues 22–42 (LLVLVIGFFLVTLTFVVISKP). At 43-583 (DALLFNLNGR…LLEVLDQLNQ (541 aa)) the chain is on the lumenal side. Residues 73-178 (RRSADTFPAA…NGKQEDGKPN (106 aa)) are disordered. 2 stretches are compositionally biased toward basic and acidic residues: residues 102–121 (TSEEEKRLLSSEPEQGKNEE) and 135–146 (EDNKNGEEEGHT). The segment covering 149-160 (SKVTLPTVSNYT) has biased composition (polar residues). Asn158 is a glycosylation site (N-linked (GlcNAc...) asparagine). Over residues 162-178 (RDAEDTDNGKQEDGKPN) the composition is skewed to basic and acidic residues. N-linked (GlcNAc...) asparagine glycans are attached at residues Asn229, Asn382, Asn450, and Asn485.

The protein belongs to the glycosyltransferase 61 family.

The protein localises to the golgi apparatus membrane. It functions in the pathway glycan metabolism. Its function is as follows. Glycosyltransferase involved in the arabinosylation of xylan, the major hemicellulose (non-cellulosic component) of primary and secondary walls of angiosperms. Possesses alpha-1,3-arabinosyltransferase activity, transferring an arabinofuranose residue to the xylan backbone. The sequence is that of Alpha-1,3-arabinosyltransferase XAT2 from Oryza sativa subsp. japonica (Rice).